The primary structure comprises 61 residues: Overexpressed in colon carcinoma 1 protein homolog (61 aa).

Positions M1–P13 are enriched in polar residues. A disordered region spans residues M1–E61. The span at S18 to R34 shows a compositional bias: basic and acidic residues. Polar residues predominate over residues T48–E61.

The protein belongs to the OCC1 family.

This chain is Overexpressed in colon carcinoma 1 protein homolog (si:dkey-261e22.4), found in Danio rerio (Zebrafish).